The chain runs to 468 residues: UDP-N-acetylmuramate--L-alanine ligase (468 aa).

G112–T118 serves as a coordination point for ATP.

Belongs to the MurCDEF family.

It is found in the cytoplasm. The enzyme catalyses UDP-N-acetyl-alpha-D-muramate + L-alanine + ATP = UDP-N-acetyl-alpha-D-muramoyl-L-alanine + ADP + phosphate + H(+). The protein operates within cell wall biogenesis; peptidoglycan biosynthesis. Cell wall formation. The chain is UDP-N-acetylmuramate--L-alanine ligase from Neisseria meningitidis serogroup C (strain 053442).